The following is a 228-amino-acid chain: Cytochrome c oxidase subunit 2 (228 aa).

At Met-1–Ser-14 the chain is on the mitochondrial intermembrane side. A helical membrane pass occupies residues Pro-15–Met-45. At Leu-46–Gln-58 the chain is on the mitochondrial matrix side. Residues Glu-59 to Met-86 traverse the membrane as a helical segment. At Asp-87–Ser-228 the chain is on the mitochondrial intermembrane side. His-160, Cys-195, Glu-197, Cys-199, His-203, and Met-206 together coordinate Cu cation. Glu-197 contacts Mg(2+).

Belongs to the cytochrome c oxidase subunit 2 family. As to quaternary structure, component of the cytochrome c oxidase (complex IV, CIV), a multisubunit enzyme composed of 14 subunits. The complex is composed of a catalytic core of 3 subunits MT-CO1, MT-CO2 and MT-CO3, encoded in the mitochondrial DNA, and 11 supernumerary subunits COX4I, COX5A, COX5B, COX6A, COX6B, COX6C, COX7A, COX7B, COX7C, COX8 and NDUFA4, which are encoded in the nuclear genome. The complex exists as a monomer or a dimer and forms supercomplexes (SCs) in the inner mitochondrial membrane with NADH-ubiquinone oxidoreductase (complex I, CI) and ubiquinol-cytochrome c oxidoreductase (cytochrome b-c1 complex, complex III, CIII), resulting in different assemblies (supercomplex SCI(1)III(2)IV(1) and megacomplex MCI(2)III(2)IV(2)). Found in a complex with TMEM177, COA6, COX18, COX20, SCO1 and SCO2. Interacts with TMEM177 in a COX20-dependent manner. Interacts with COX20. Interacts with COX16. The cofactor is Cu cation.

The protein localises to the mitochondrion inner membrane. It carries out the reaction 4 Fe(II)-[cytochrome c] + O2 + 8 H(+)(in) = 4 Fe(III)-[cytochrome c] + 2 H2O + 4 H(+)(out). Component of the cytochrome c oxidase, the last enzyme in the mitochondrial electron transport chain which drives oxidative phosphorylation. The respiratory chain contains 3 multisubunit complexes succinate dehydrogenase (complex II, CII), ubiquinol-cytochrome c oxidoreductase (cytochrome b-c1 complex, complex III, CIII) and cytochrome c oxidase (complex IV, CIV), that cooperate to transfer electrons derived from NADH and succinate to molecular oxygen, creating an electrochemical gradient over the inner membrane that drives transmembrane transport and the ATP synthase. Cytochrome c oxidase is the component of the respiratory chain that catalyzes the reduction of oxygen to water. Electrons originating from reduced cytochrome c in the intermembrane space (IMS) are transferred via the dinuclear copper A center (CU(A)) of subunit 2 and heme A of subunit 1 to the active site in subunit 1, a binuclear center (BNC) formed by heme A3 and copper B (CU(B)). The BNC reduces molecular oxygen to 2 water molecules using 4 electrons from cytochrome c in the IMS and 4 protons from the mitochondrial matrix. This is Cytochrome c oxidase subunit 2 (MT-CO2) from Anas platyrhynchos (Mallard).